Consider the following 257-residue polypeptide: Thioesterase frbE (257 aa).

It belongs to the AMT4 thioesterase family.

It functions in the pathway antifungal biosynthesis. In terms of biological role, thioesterase; part of the gene cluster that mediates the biosynthesis of the antifungal antibiotic FR901469, an inhibitor of beta-1,3-glucansynthase, exerting antifungal activity against the pathogenes Candida albicans and Aspergillus fumigatus. FR901469 is a cyclic depsipeptide containing 12 amino acid residues and a fatty acid chain. The NRPS frbI contains 12 modules responsible for the formation of the depsipeptide backbone which is denoted as Acyl-Thr-Ala-Tyr-Val-4OHPro-Thr-Thr-3OHPro-threo3OHGln-Gly-Thr-Orn-OH (C71H116N14O23). The PKS frbB is probably involved in the production of the hydrocarbon chain, and the acyl-CoA ligase frbC might be involved in the transport of the chain to the peptide ptoduct of frbI. Because FR901469 contains 3 hydroxylated amino acid residues, the 3 oxygenases frbA, frbH, and frbJ might be participating in amino acid hydroxylation. As no thioesterase domains were detected in frbI or frbB, the thioesterases frbD and frbE may instead release and cyclize the products of the NRPS and PKS, respectively. The protein is Thioesterase frbE of Dothideomycetidae sp. (strain 11243) (Fungal sp. (strain No.11243)).